A 1078-amino-acid chain; its full sequence is Rho family-interacting cell polarization regulator 2 (1078 aa).

Ser46 and Ser62 each carry phosphoserine. Positions 80 to 138 (MHNLGHKNNNTPKEPQPKRVEEVYRALKNGLDEYLEFHQTELDKLTAQLKDMKRNSRLG) are involved in cell filopodia formation. The stretch at 108 to 137 (NGLDEYLEFHQTELDKLTAQLKDMKRNSRL) forms a coiled coil. Ser366 bears the Phosphoserine mark. The span at 488 to 508 (SSLSSQNEGTEDSSSASSRNS) shows a compositional bias: polar residues. The segment at 488 to 534 (SSLSSQNEGTEDSSSASSRNSLGEDHEPKSHPKSDTVEPGKPGVATR) is disordered. Positions 509–525 (LGEDHEPKSHPKSDTVE) are enriched in basic and acidic residues. Phosphoserine is present on Ser582.

This sequence belongs to the RIPOR family. As to quaternary structure, homooligomer; homooligomerization is regulated by RHOC and leads to the formation of concatemers through the association of N- and C-termini. Interacts (phosphorylated form) with 14-3-3 proteins; these interactions occur during myogenic cell differentiation and also induces T cell proliferation arrest. Interacts (phosphorylated form) with HDAC6; this interaction occurs during early myogenic differentiation, prevents HDAC6 to deacetylate tubulin and also induces T cell proliferation arrest. Interacts with DYSF; this interaction occurs during early myogenic differentiation. Interacts with MYOF. Interacts (via active GTP- or inactive GDP-bound forms) with RHOA; this interaction is direct, blocks the loading of GTP to RHOA and decreases upon chemokine CCL19 stimulation in primary T lymphocytes. Interacts with RHOC. Interacts (via phosphorylated form) with YWHAB; this interaction occurs in a chemokine-dependent manner and does not compete for binding of RIPOR2 with RHOA nor blocks inhibition of RIPOR2-mediated RHOA activity. Interacts with YWHAE. Interacts with YWHAQ. Phosphorylated. Chemokine-induced phosphorylation in neutrophils occurs in a PKC- and AKT-dependent manner, resulting in RIPOR2 interaction with YWHAB and stabilization. Phosphorylated by PKCA, AKT1 and MAPKAPK1A; in vitro. As to expression, expressed in the cochlea. Expressed in inner hair cells and outer hair cells and Hensen's cells (at protein level). Expressed in the brain, cerebellum, spinal cord, retina, heart, spleen liver, kidney, bladder, muscle and lung. Expressed in the cochlea of the inner ear.

It is found in the cytoplasm. The protein localises to the cytoskeleton. It localises to the cell projection. The protein resides in the filopodium. Its subcellular location is the stereocilium. It is found in the stereocilium membrane. The protein localises to the apical cell membrane. Its function is as follows. Acts as an inhibitor of the small GTPase RHOA and plays several roles in the regulation of myoblast and hair cell differentiation, lymphocyte T proliferation and neutrophil polarization. Plays a role in fetal mononuclear myoblast differentiation by promoting filopodia and myotube formation. Maintains naive T lymphocytes in a quiescent state and prevents chemokine-induced T lymphocyte responses, such as cell adhesion, polarization and migration. Involved also in the regulation of neutrophil polarization, chemotaxis and adhesion. Required for normal development of inner and outer hair cell stereocilia within the cochlea of the inner ear. Plays a role for maintaining the structural organization of the basal domain of stereocilia. Involved in mechanosensory hair cell function. Required for normal hearing. In Mus musculus (Mouse), this protein is Rho family-interacting cell polarization regulator 2.